Reading from the N-terminus, the 271-residue chain is Glutamate racemase (271 aa).

Substrate is bound by residues 9–10 and 41–42; these read DS and YG. Residue Cys72 is the Proton donor/acceptor of the active site. Position 73 to 74 (73 to 74) interacts with substrate; it reads NT. The active-site Proton donor/acceptor is the Cys183. 184–185 is a substrate binding site; that stretch reads TH.

This sequence belongs to the aspartate/glutamate racemases family.

It catalyses the reaction L-glutamate = D-glutamate. The protein operates within cell wall biogenesis; peptidoglycan biosynthesis. Provides the (R)-glutamate required for cell wall biosynthesis. The sequence is that of Glutamate racemase from Exiguobacterium sibiricum (strain DSM 17290 / CCUG 55495 / CIP 109462 / JCM 13490 / 255-15).